A 100-amino-acid polypeptide reads, in one-letter code: Small ubiquitin-related modifier 1 (100 aa).

The Ubiquitin-like domain occupies Glu-19 to Gly-96. Gly-96 participates in a covalent cross-link: Glycyl lysine isopeptide (Gly-Lys) (interchain with K-? in acceptor proteins). Residues Cys-97–Asp-100 constitute a propeptide that is removed on maturation.

Belongs to the ubiquitin family. SUMO subfamily. As to quaternary structure, interacts with sae2, ube2i, ranbp2, pias1 and pias2. Covalently attached to a number of proteins. Cleavage of precursor form by a sentrin-specific protease is necessary for function.

The protein resides in the nucleus membrane. It is found in the nucleus speckle. It localises to the cytoplasm. The protein localises to the nucleus. Its subcellular location is the PML body. The protein resides in the cell membrane. In terms of biological role, ubiquitin-like protein that can be covalently attached to proteins as a monomer or a lysine-linked polymer. Covalent attachment via an isopeptide bond to its substrates requires prior activation by the E1 complex sae1-sae2 and linkage to the E2 enzyme ube2i. This post-translational modification on lysine residues of proteins plays a crucial role in a number of cellular processes such as nuclear transport, DNA replication and repair, mitosis and signal transduction. Polymeric sumo1 chains are also susceptible to polyubiquitination which functions as a signal for proteasomal degradation of modified proteins. This is Small ubiquitin-related modifier 1 (sumo1) from Danio rerio (Zebrafish).